The primary structure comprises 265 residues: Mlc titration factor A (265 aa).

His-111, His-148, His-152, and Glu-211 together coordinate Zn(2+).

It belongs to the MtfA family. As to quaternary structure, interacts with Mlc. The cofactor is Zn(2+).

It localises to the cytoplasm. In terms of biological role, involved in the modulation of the activity of the glucose-phosphotransferase system (glucose-PTS). Interacts with the transcriptional repressor Mlc, preventing its interaction with DNA and leading to the modulation of expression of genes regulated by Mlc, including ptsG, which encodes the PTS system glucose-specific EIICB component. Its function is as follows. Shows zinc-dependent metallopeptidase activity. The chain is Mlc titration factor A from Escherichia coli O9:H4 (strain HS).